The following is a 224-amino-acid chain: Phosphoglycolate phosphatase (224 aa).

Residue aspartate 8 is the Nucleophile of the active site. 4 residues coordinate Mg(2+): aspartate 8, aspartate 10, glycine 11, and glycine 43. Residue lysine 151 participates in substrate binding. Residues aspartate 174, serine 175, and aspartate 178 each coordinate Mg(2+).

Belongs to the HAD-like hydrolase superfamily. Archaeal SPP-like hydrolase family. Homodimer. Requires Mg(2+) as cofactor.

It carries out the reaction 2-phosphoglycolate + H2O = glycolate + phosphate. Its activity is regulated as follows. Inhibited by Ca(2+) ions and by high chloride ion concentration. By contrast, low chloride concentration (up to 50 mM) slightly activate the enzyme. Its function is as follows. Catalyzes the dephosphorylation of 2-phosphoglycolate. Also has significant, but less efficient, pyrophosphatase activity, since it is able to catalyze the release of phosphate from inorganic pyrophosphate (PPi). In Thermoplasma acidophilum (strain ATCC 25905 / DSM 1728 / JCM 9062 / NBRC 15155 / AMRC-C165), this protein is Phosphoglycolate phosphatase.